Consider the following 331-residue polypeptide: 2-hydroxyacid dehydrogenase homolog (331 aa).

NAD(+)-binding positions include 154–155, 234–236, and Asp-260; these read HI and TSR. Arg-236 is an active-site residue. The active site involves Glu-265. The active-site Proton donor is His-297. 297 to 300 contacts NAD(+); sequence HQAF.

This sequence belongs to the D-isomer specific 2-hydroxyacid dehydrogenase family.

The chain is 2-hydroxyacid dehydrogenase homolog (ddh) from Zymomonas mobilis subsp. mobilis (strain ATCC 31821 / ZM4 / CP4).